The sequence spans 179 residues: ATP synthase subunit delta (179 aa).

This sequence belongs to the ATPase delta chain family. As to quaternary structure, F-type ATPases have 2 components, F(1) - the catalytic core - and F(0) - the membrane proton channel. F(1) has five subunits: alpha(3), beta(3), gamma(1), delta(1), epsilon(1). F(0) has three main subunits: a(1), b(2) and c(10-14). The alpha and beta chains form an alternating ring which encloses part of the gamma chain. F(1) is attached to F(0) by a central stalk formed by the gamma and epsilon chains, while a peripheral stalk is formed by the delta and b chains.

The protein localises to the cell inner membrane. Functionally, f(1)F(0) ATP synthase produces ATP from ADP in the presence of a proton or sodium gradient. F-type ATPases consist of two structural domains, F(1) containing the extramembraneous catalytic core and F(0) containing the membrane proton channel, linked together by a central stalk and a peripheral stalk. During catalysis, ATP synthesis in the catalytic domain of F(1) is coupled via a rotary mechanism of the central stalk subunits to proton translocation. In terms of biological role, this protein is part of the stalk that links CF(0) to CF(1). It either transmits conformational changes from CF(0) to CF(1) or is implicated in proton conduction. The polypeptide is ATP synthase subunit delta (Bordetella avium (strain 197N)).